Here is a 380-residue protein sequence, read N- to C-terminus: Crotonobetainyl-CoA reductase (380 aa).

Belongs to the acyl-CoA dehydrogenase family. As to quaternary structure, homotetramer. It depends on FAD as a cofactor.

It is found in the cytoplasm. It carries out the reaction 4-(trimethylamino)butanoyl-CoA + oxidized [electron-transfer flavoprotein] + H(+) = crotonobetainyl-CoA + reduced [electron-transfer flavoprotein]. Its pathway is amine and polyamine metabolism; carnitine metabolism. Its function is as follows. Catalyzes the reduction of crotonobetainyl-CoA to gamma-butyrobetainyl-CoA. The chain is Crotonobetainyl-CoA reductase from Proteus sp. (strain LE138).